The primary structure comprises 552 residues: Cation/acetate symporter ActP (552 aa).

Helical transmembrane passes span 6–26 (LLAVLALLLSGPVVAADAIAG), 35–55 (MEAIVMFLIFVAMTLGITYWA), 78–98 (GLAMAGDFMSAASFLGISALV), 103–123 (FDGLIYSLGFLVGWPIILFLI), 151–171 (LSACGSLVVVALYLIAQMVGA), 185–205 (VAVVLVGILMVMYVLFGGMLA), 208–228 (WVQIIKAVLLLFGASFMAIMV), 264–284 (ISALSLGLGLMFGTAGLPHIL), 305–325 (GLMGYFYFLTFIIGFGAILLV), 357–377 (LFLGFISAVAFATILAVVAGL), 407–427 (VSKITVVALGVVAILLGILFE), 431–451 (IAFMVGLAFSIAASCNFPIIL), 467–487 (GGWLGLLTAVILMILGPTIWV), and 496–516 (IFPYEYPALFSMLVAFIGTWL).

This sequence belongs to the sodium:solute symporter (SSF) (TC 2.A.21) family.

Its subcellular location is the cell inner membrane. Transports acetate. In Erwinia tasmaniensis (strain DSM 17950 / CFBP 7177 / CIP 109463 / NCPPB 4357 / Et1/99), this protein is Cation/acetate symporter ActP.